The chain runs to 533 residues: DNA-directed RNA polymerase III subunit RPC3 (533 aa).

Phosphoserine is present on S194. The tract at residues 197–230 (GKGKRRRSSDEDATGEPKAKRPKQTTDNKEPIPD) is disordered. Residues 211-228 (GEPKAKRPKQTTDNKEPI) are compositionally biased toward basic and acidic residues.

The protein belongs to the eukaryotic RPC3/POLR3C RNA polymerase subunit family. As to quaternary structure, component of the RNA polymerase III complex consisting of 17 subunits: a ten-subunit horseshoe-shaped catalytic core composed of POLR3A/RPC1, POLR3B/RPC2, POLR1C/RPAC1, POLR1D/RPAC2, POLR3K/RPC10, POLR2E/RPABC1, POLR2F/RPABC2, POLR2H/RPABC3, POLR2K/RPABC4 and POLR2L/RPABC5; a mobile stalk composed of two subunits POLR3H/RPC8 and CRCP/RPC9, protruding from the core and functioning primarily in transcription initiation; and additional subunits homologous to general transcription factors of the RNA polymerase II machinery, POLR3C/RPC3-POLR3F/RPC6-POLR3G/RPC7 heterotrimer required for transcription initiation and POLR3D/RPC4-POLR3E/RPC5 heterodimer involved in both transcription initiation and termination. Directly interacts with POLR3G/RPC7 and POLR3GL. Directly interacts with POLR3F/RPC6. Interacts with GTF3C4. As part of the RNA polymerase III complex, interacts with PKP2.

It localises to the nucleus. DNA-dependent RNA polymerase catalyzes the transcription of DNA into RNA using the four ribonucleoside triphosphates as substrates. Specific peripheric component of RNA polymerase III (Pol III) which synthesizes small non-coding RNAs including 5S rRNA, snRNAs, tRNAs and miRNAs from at least 500 distinct genomic loci. Part of POLR3C/RPC3-POLR3F/RPC6-POLR3G/RPC7 heterotrimer, coordinates the dynamics of Pol III stalk and clamp modules during the transition from apo to elongation state. Pol III plays a key role in sensing and limiting infection by intracellular bacteria and DNA viruses. Acts as a nuclear and cytosolic DNA sensor involved in innate immune response. Can sense non-self dsDNA that serves as template for transcription into dsRNA. The non-self RNA polymerase III transcripts, such as Epstein-Barr virus-encoded RNAs (EBERs) induce type I interferon and NF-kappa-B through the RIG-I pathway. Preferentially binds single-stranded DNA (ssDNA) in a sequence-independent manner. The chain is DNA-directed RNA polymerase III subunit RPC3 (POLR3C) from Bos taurus (Bovine).